Consider the following 49-residue polypeptide: U3-plectoxin-Pt1a (49 aa).

5 disulfide bridges follow: C2/C16, C9/C30, C15/C41, C32/C39, and C45/C49.

As to expression, expressed by the venom gland.

It is found in the secreted. Its function is as follows. Potent toxin that may paralyze and/or kill insect pests such as H.virescens (lepidoptera), S.exigua (beet armyworm) and M.sexta (tobacco hornworm). This chain is U3-plectoxin-Pt1a, found in Plectreurys tristis (Spider).